A 194-amino-acid polypeptide reads, in one-letter code: NADH-quinone oxidoreductase subunit B (194 aa).

Residues C73, C74, C138, and C168 each coordinate [4Fe-4S] cluster.

Belongs to the complex I 20 kDa subunit family. In terms of assembly, NDH-1 is composed of 14 different subunits. Subunits NuoB, C, D, E, F, and G constitute the peripheral sector of the complex. It depends on [4Fe-4S] cluster as a cofactor.

It localises to the cell inner membrane. The catalysed reaction is a quinone + NADH + 5 H(+)(in) = a quinol + NAD(+) + 4 H(+)(out). NDH-1 shuttles electrons from NADH, via FMN and iron-sulfur (Fe-S) centers, to quinones in the respiratory chain. The immediate electron acceptor for the enzyme in this species is believed to be ubiquinone. Couples the redox reaction to proton translocation (for every two electrons transferred, four hydrogen ions are translocated across the cytoplasmic membrane), and thus conserves the redox energy in a proton gradient. The protein is NADH-quinone oxidoreductase subunit B of Rhizobium johnstonii (strain DSM 114642 / LMG 32736 / 3841) (Rhizobium leguminosarum bv. viciae).